The primary structure comprises 240 residues: Protein GrpE (240 aa).

2 disordered regions span residues 1-54 (MSGD…NEAR) and 206-240 (VSMG…DGNG). Residues 215-233 (GASSQPAEAPAADAPAEDS) are compositionally biased toward low complexity.

Belongs to the GrpE family. As to quaternary structure, homodimer.

It is found in the cytoplasm. Functionally, participates actively in the response to hyperosmotic and heat shock by preventing the aggregation of stress-denatured proteins, in association with DnaK and GrpE. It is the nucleotide exchange factor for DnaK and may function as a thermosensor. Unfolded proteins bind initially to DnaJ; upon interaction with the DnaJ-bound protein, DnaK hydrolyzes its bound ATP, resulting in the formation of a stable complex. GrpE releases ADP from DnaK; ATP binding to DnaK triggers the release of the substrate protein, thus completing the reaction cycle. Several rounds of ATP-dependent interactions between DnaJ, DnaK and GrpE are required for fully efficient folding. This chain is Protein GrpE, found in Synechococcus sp. (strain WH7803).